The primary structure comprises 166 residues: UPF0304 protein VS_1049 (166 aa).

This sequence belongs to the UPF0304 family.

This chain is UPF0304 protein VS_1049, found in Vibrio atlanticus (strain LGP32) (Vibrio splendidus (strain Mel32)).